A 347-amino-acid polypeptide reads, in one-letter code: O-methyltransferase aunE (347 aa).

An S-adenosyl-L-methionine-binding site is contributed by W166. H265 (proton acceptor) is an active-site residue.

It belongs to the class I-like SAM-binding methyltransferase superfamily. Cation-independent O-methyltransferase family.

The protein operates within secondary metabolite biosynthesis. Functionally, O-methyltransferase; part of the gene cluster that mediates the biosynthesis of aurasperone B, a dimeric gamma-naphthopyrone. The first step in the biosynthesis of aurasperone B is the production of gamma-naphthopyrone precursor YWA1 by the non-reducing polyketide synthase albA, via condensation of one acetyl-CoA starter unit with 6 malonyl-CoA units. YWA1 is then methylated by aunE at position C-6 to yield foncesin which is further methylated at position C-8 by aunD to produce fonsecin B. A key enzyme in the biosynthetic pathway is the cytochrome P450 monooxygenase aunB which catalyzes the oxidative dimerization of fonsecin B to aurasperone B. AunB also catalyzes the oxidative dimerization of rubrofusarin B into aurasperone A. In Aspergillus niger (strain ATCC 1015 / CBS 113.46 / FGSC A1144 / LSHB Ac4 / NCTC 3858a / NRRL 328 / USDA 3528.7), this protein is O-methyltransferase aunE.